A 131-amino-acid polypeptide reads, in one-letter code: Translation initiation factor 5A (131 aa).

Lysine 37 bears the Hypusine mark.

It belongs to the eIF-5A family.

It localises to the cytoplasm. In terms of biological role, functions by promoting the formation of the first peptide bond. In Methanococcus maripaludis (strain DSM 14266 / JCM 13030 / NBRC 101832 / S2 / LL), this protein is Translation initiation factor 5A.